Consider the following 287-residue polypeptide: Glutamate racemase (287 aa).

Positions 1 to 15 (MATKPQDANTTSREA) are enriched in polar residues. The tract at residues 1 to 25 (MATKPQDANTTSREAITSKADSPPR) is disordered. Residues 32–33 (DS) and 64–65 (YG) contribute to the substrate site. C96 acts as the Proton donor/acceptor in catalysis. 97–98 (NT) serves as a coordination point for substrate. C208 acts as the Proton donor/acceptor in catalysis. 209-210 (TH) provides a ligand contact to substrate.

It belongs to the aspartate/glutamate racemases family.

It carries out the reaction L-glutamate = D-glutamate. Its pathway is cell wall biogenesis; peptidoglycan biosynthesis. Functionally, provides the (R)-glutamate required for cell wall biosynthesis. This is Glutamate racemase from Yersinia pseudotuberculosis serotype I (strain IP32953).